A 362-amino-acid polypeptide reads, in one-letter code: 3-dehydroquinate synthase (362 aa).

NAD(+)-binding positions include 71-76, 105-109, 129-130, Lys142, Lys151, and 169-172; these read DGEQYK, GVIGD, TT, and CLKT. Residues Glu184, His247, and His264 each coordinate Zn(2+).

It belongs to the sugar phosphate cyclases superfamily. Dehydroquinate synthase family. Requires Co(2+) as cofactor. The cofactor is Zn(2+). NAD(+) serves as cofactor.

It localises to the cytoplasm. It carries out the reaction 7-phospho-2-dehydro-3-deoxy-D-arabino-heptonate = 3-dehydroquinate + phosphate. The protein operates within metabolic intermediate biosynthesis; chorismate biosynthesis; chorismate from D-erythrose 4-phosphate and phosphoenolpyruvate: step 2/7. Its function is as follows. Catalyzes the conversion of 3-deoxy-D-arabino-heptulosonate 7-phosphate (DAHP) to dehydroquinate (DHQ). The chain is 3-dehydroquinate synthase from Salmonella enteritidis PT4 (strain P125109).